The chain runs to 165 residues: UPF0303 protein BMA1246 (165 aa).

Belongs to the UPF0303 family.

The chain is UPF0303 protein BMA1246 from Burkholderia mallei (strain ATCC 23344).